The following is a 143-amino-acid chain: Transcriptional regulator SlyA (143 aa).

Residues 2–135 (ESTLGSDLSR…LTNLVERLEQ (134 aa)) form the HTH marR-type domain. A DNA-binding region (H-T-H motif) is located at residues 49–72 (QIQLAKAIGIEQPSLVRTLDQLED).

It belongs to the SlyA family. Homodimer.

In terms of biological role, transcription regulator that can specifically activate or repress expression of target genes. The chain is Transcriptional regulator SlyA from Edwardsiella tarda.